We begin with the raw amino-acid sequence, 161 residues long: Cytochrome c-type biogenesis protein CcmE (161 aa).

The Cytoplasmic portion of the chain corresponds to 1-8 (MNPRRKKR). Residues 9–29 (LGIVLAIFIGISATIGLMLYA) form a helical; Signal-anchor for type II membrane protein membrane-spanning segment. Topologically, residues 30–161 (LNQNMDLFYT…SSEQKQGSGE (132 aa)) are periplasmic. Heme-binding residues include His-129 and Tyr-133. Residues 142–161 (MKKTHEPLQYSSEQKQGSGE) form a disordered region. Over residues 150–161 (QYSSEQKQGSGE) the composition is skewed to polar residues.

The protein belongs to the CcmE/CycJ family.

Its subcellular location is the cell inner membrane. Its function is as follows. Heme chaperone required for the biogenesis of c-type cytochromes. Transiently binds heme delivered by CcmC and transfers the heme to apo-cytochromes in a process facilitated by CcmF and CcmH. This Vibrio parahaemolyticus serotype O3:K6 (strain RIMD 2210633) protein is Cytochrome c-type biogenesis protein CcmE.